Here is a 118-residue protein sequence, read N- to C-terminus: MLRVVAKAQYPAAVRCFSTSHAAFAKVSFESSEDFLKKIGRDTVKLAEKFETWDELKNSTSSDLKEKGIEARDRRYIMTQLYRYKNGEKIREIPRGKKTWGGERKRNLVQALFKAGQN.

The N-terminal 24 residues, 1 to 24 (MLRVVAKAQYPAAVRCFSTSHAAF), are a transit peptide targeting the mitochondrion.

Belongs to the mitochondrion-specific ribosomal protein mS41 family.

Its subcellular location is the mitochondrion. Its function is as follows. Involved in telomere length regulation. The sequence is that of Small ribosomal subunit protein mS41 (FYV4) from Yarrowia lipolytica (strain CLIB 122 / E 150) (Yeast).